Reading from the N-terminus, the 506-residue chain is Hexokinase-6 (506 aa).

Residues 6–26 (VVGTAVVVCAAAAAAVGVAVV) traverse the membrane as a helical segment. One can recognise a Hexokinase domain in the interval 43 to 497 (RRAAAVIEEV…SGIGAALLAA (455 aa)). Positions 98–236 (TGDEHGLFYA…GLDMKVTALV (139 aa)) are hexokinase small subdomain. ADP contacts are provided by G112, T113, and N114. T202, K203, N237, and D238 together coordinate D-glucose. Positions 237–486 (NDTVGTLAGG…SSVVVKLAND (250 aa)) are hexokinase large subdomain. Position 261 (T261) interacts with ADP. Residues N264, E292, and E323 each contribute to the D-glucose site. G451 lines the ADP pocket.

It belongs to the hexokinase family. Expressed in roots, leaves, flowers, immature seeds and endosperm.

It is found in the plastid. It localises to the chloroplast outer membrane. It carries out the reaction a D-hexose + ATP = a D-hexose 6-phosphate + ADP + H(+). It catalyses the reaction D-fructose + ATP = D-fructose 6-phosphate + ADP + H(+). The catalysed reaction is D-glucose + ATP = D-glucose 6-phosphate + ADP + H(+). It functions in the pathway carbohydrate metabolism; hexose metabolism. Its pathway is carbohydrate degradation; glycolysis; D-glyceraldehyde 3-phosphate and glycerone phosphate from D-glucose: step 1/4. Its function is as follows. Fructose and glucose phosphorylating enzyme. Functions as a glucose sensor for plant growth and photosynthesis. This Oryza sativa subsp. japonica (Rice) protein is Hexokinase-6 (HXK6).